Reading from the N-terminus, the 26-residue chain is Hainantoxin F1-31.97 (26 aa).

2 disulfides stabilise this stretch: Cys2-Cys16 and Cys9-Cys21.

It belongs to the neurotoxin 10 (Hwtx-1) family. 17 (Hntx-9) subfamily. Expressed by the venom gland.

The protein resides in the secreted. In terms of biological role, ion channel inhibitor. This chain is Hainantoxin F1-31.97, found in Cyriopagopus hainanus (Chinese bird spider).